The following is a 471-amino-acid chain: Glutamate--tRNA ligase (471 aa).

The 'HIGH' region signature appears at 9–19 (PSPTGYLHVGG). Zn(2+) is bound by residues cysteine 98, cysteine 100, cysteine 125, and histidine 127. The short motif at 237–241 (KLSKR) is the 'KMSKS' region element. Lysine 240 contacts ATP.

The protein belongs to the class-I aminoacyl-tRNA synthetase family. Glutamate--tRNA ligase type 1 subfamily. As to quaternary structure, monomer. The cofactor is Zn(2+).

Its subcellular location is the cytoplasm. It catalyses the reaction tRNA(Glu) + L-glutamate + ATP = L-glutamyl-tRNA(Glu) + AMP + diphosphate. Functionally, catalyzes the attachment of glutamate to tRNA(Glu) in a two-step reaction: glutamate is first activated by ATP to form Glu-AMP and then transferred to the acceptor end of tRNA(Glu). The sequence is that of Glutamate--tRNA ligase from Salmonella choleraesuis (strain SC-B67).